Consider the following 245-residue polypeptide: UPF0319 protein VV0984 (245 aa).

An N-terminal signal peptide occupies residues methionine 1–alanine 20.

This sequence belongs to the UPF0319 family.

The sequence is that of UPF0319 protein VV0984 from Vibrio vulnificus (strain YJ016).